The sequence spans 144 residues: Leghemoglobin-1 (144 aa).

One can recognise a Globin domain in the interval 2-144 (GFTEKQEALV…DGLATAIKAA (143 aa)). 2 positions are modified to nitrated tyrosine: tyrosine 25 and tyrosine 30. Serine 45 serves as a coordination point for heme b. At serine 45 the chain carries Phosphoserine. Histidine 62 is a binding site for O2. Residues lysine 65, histidine 93, and lysine 96 each contribute to the heme b site. The residue at position 134 (tyrosine 134) is a Nitrated tyrosine.

Belongs to the plant globin family. As to quaternary structure, monomer. In terms of processing, nitrated in effective nodules and particularly in hypoxic conditions; this mechanism may play a protective role in the symbiosis by buffering toxic peroxynitrite NO(2)(-). Nitration level decrease during nodule senescence. Post-translationally, phosphorylation at Ser-45 disrupts the molecular environment of its porphyrin ring oxygen binding pocket, thus leading to a reduced oxygen consumption and to the delivery of oxygen O(2) to symbiosomes. As to expression, root nodules.

The protein resides in the cytoplasm. Its subcellular location is the cytosol. The protein localises to the nucleus. Its function is as follows. Leghemoglobin that reversibly binds oxygen O(2) through a pentacoordinated heme iron. In root nodules, facilitates the diffusion of oxygen to the bacteroids while preventing the bacterial nitrogenase from being inactivated by buffering dioxygen, nitric oxide and carbon monoxide, and promoting the formation of reactive oxygen species (ROS, e.g. H(2)O(2)). This role is essential for symbiotic nitrogen fixation (SNF). This chain is Leghemoglobin-1, found in Vicia faba (Broad bean).